Consider the following 419-residue polypeptide: Murein hydrolase activator EnvC (419 aa).

Positions 1–34 (MTRAVKPRRFAIRPIIYASVLSAGVLLCAFSAHA) are cleaved as a signal peptide. Coiled-coil stretches lie at residues 35–124 (DERD…LDAA) and 155–271 (LNQA…ATRK). Basic and acidic residues predominate over residues 252 to 270 (EREAREAQAVRDRQKEATR). Residues 252–290 (EREAREAQAVRDRQKEATRKGTTYKPTESEKSLMSRTGG) form a disordered region.

It belongs to the peptidase M23B family.

It localises to the periplasm. Activator of the cell wall hydrolases AmiA and AmiB. Required for septal murein cleavage and daughter cell separation during cell division. In vitro, exhibits weak endoproteolytic activity on beta-casein. This is Murein hydrolase activator EnvC (envC) from Escherichia coli (strain K12).